Consider the following 238-residue polypeptide: Ditrans,polycis-undecaprenyl-diphosphate synthase ((2E,6E)-farnesyl-diphosphate specific) (238 aa).

Asp-14 is an active-site residue. Asp-14 is a binding site for Mg(2+). Substrate-binding positions include 15–18 (GNGR), Trp-19, Arg-27, His-31, and 59–61 (SSE). Asn-62 acts as the Proton acceptor in catalysis. Residues Trp-63, Arg-65, Arg-182, and 188 to 190 (RIS) contribute to the substrate site. Glu-201 provides a ligand contact to Mg(2+).

This sequence belongs to the UPP synthase family. Homodimer. It depends on Mg(2+) as a cofactor.

It carries out the reaction 8 isopentenyl diphosphate + (2E,6E)-farnesyl diphosphate = di-trans,octa-cis-undecaprenyl diphosphate + 8 diphosphate. In terms of biological role, catalyzes the sequential condensation of isopentenyl diphosphate (IPP) with (2E,6E)-farnesyl diphosphate (E,E-FPP) to yield (2Z,6Z,10Z,14Z,18Z,22Z,26Z,30Z,34E,38E)-undecaprenyl diphosphate (di-trans,octa-cis-UPP). UPP is the precursor of glycosyl carrier lipid in the biosynthesis of bacterial cell wall polysaccharide components such as peptidoglycan and lipopolysaccharide. This is Ditrans,polycis-undecaprenyl-diphosphate synthase ((2E,6E)-farnesyl-diphosphate specific) from Legionella pneumophila subsp. pneumophila (strain Philadelphia 1 / ATCC 33152 / DSM 7513).